The primary structure comprises 157 residues: MMKFKKVVVGGTFDRLHLGHKALLRKAFEVGKIVYIGLTSDDMVKNKPYAEKILPYERRLKDLIEFLEVNNFRRYRIIKINNAIGFTTRIRSLEAIVVSEETYKGALLVNRAREEVGLRPLEIIVIPIIKSKLGDKISSSLIRAGLIDPFGNPIKRE.

Belongs to the eukaryotic CoaD family. In terms of assembly, monomer.

Its subcellular location is the cytoplasm. The enzyme catalyses (R)-4'-phosphopantetheine + ATP + H(+) = 3'-dephospho-CoA + diphosphate. It participates in cofactor biosynthesis; coenzyme A biosynthesis. Reversibly transfers an adenylyl group from ATP to 4'-phosphopantetheine, yielding dephospho-CoA (dPCoA) and pyrophosphate. This Pyrococcus abyssi (strain GE5 / Orsay) protein is Phosphopantetheine adenylyltransferase.